Reading from the N-terminus, the 499-residue chain is MSNSNDNIWNNTEELNELLRIRREKLNILRSMGIEPYGIDRFERTNLSSDIKNDYENFEGKVVTLAGRIMSKRSHGKASFADIQDRDGRIQIYVKYDTVGEKNYEIFKILDIGDIIGVTGEVFKSKTGEITIRVTDFKLLSKSLQILPEKWHGLKDPDLRYRQRYTDLIINPEVKEVFLKRTKIIKAIREFLDNRGFLEVETPILHTIAGGAAARPFITHHNALDIDMYLRIALELHLKRLIVGGLEKVYEMGRVFRNEGMDIRHNPEFTLLELYEAYTDYYGMMELTEQLFAYVAQKVNGITKIVYQGTEIDLTPPWKRITMVDAIKEYVGVDFNEVKTDEEAIEIAKKLNLETKEGMKKGEVIALVFDELVEQHLIQPTFVMDYPVEISPLAKRKHDNPAFTSRFEAFIYGREVANAFSELNDPIDQKERFLEQLKQREAGDEEAHMMDEDFINALEVGMPPTGGLGIGVDRLVMFMTDAYSIRDVILFPTMKPKND.

Mg(2+) is bound by residues Glu408 and Glu415.

This sequence belongs to the class-II aminoacyl-tRNA synthetase family. Homodimer. Requires Mg(2+) as cofactor.

The protein localises to the cytoplasm. It catalyses the reaction tRNA(Lys) + L-lysine + ATP = L-lysyl-tRNA(Lys) + AMP + diphosphate. The chain is Lysine--tRNA ligase from Thermoanaerobacter pseudethanolicus (strain ATCC 33223 / 39E) (Clostridium thermohydrosulfuricum).